The sequence spans 61 residues: Large ribosomal subunit protein uL30 (61 aa).

The protein belongs to the universal ribosomal protein uL30 family. As to quaternary structure, part of the 50S ribosomal subunit.

The sequence is that of Large ribosomal subunit protein uL30 from Chlorobium phaeobacteroides (strain DSM 266 / SMG 266 / 2430).